Reading from the N-terminus, the 546-residue chain is MAAKDIRFGEDARTRMVRGVNVLANAVKATLGPKGRNVVLEKSFGAPTITKDGVSVAKEIELADKFENMGAQMVKEVASKTNDNAGDGTTTATVLAQALIREGAKAVAAGMNPMDLKRGIDQAVKAAVIELKNISKPTTDDKAIAQVGTISANSDESIGNIIAEAMQKVGKEGVITVEEGSGLENELDVVEGMQFDRGYLSPYFINNQQSQSADLDDPFILLHDKKISNVRDLLPVLEGVAKAGKPLLIVAEEVEGEALATLVVNTIRGIVKVVAVKAPGFGDRRKAMLEDMAVLTGGTVISEEVGLALEKATIKDLGRAKKVQVSKENTTIIDGAGDSATIEARVGQIKTQIEDTSSDYDREKLQERVAKLAGGVAVIKVGASTEIEMKEKKARVEDALHATRAAVEEGVVPGGGVALVRALVAVGNLTGANEDQTHGIQIALRAMEAPLREIVANAGEEPSVILNKVKEGTGNYGYNAANGEFGDMVEFGILDPTKVTRSALQNAASIAGLMITTEAMVADAPKKDEPAMPAGGGMGGMGGMDF.

ATP is bound by residues 30–33 (TLGP), lysine 51, 87–91 (DGTTT), glycine 415, 479–481 (NAA), and aspartate 495. Positions 526 to 546 (KKDEPAMPAGGGMGGMGGMDF) are disordered. The segment covering 534–546 (AGGGMGGMGGMDF) has biased composition (gly residues).

Belongs to the chaperonin (HSP60) family. Forms a cylinder of 14 subunits composed of two heptameric rings stacked back-to-back. Interacts with the co-chaperonin GroES.

Its subcellular location is the cytoplasm. It catalyses the reaction ATP + H2O + a folded polypeptide = ADP + phosphate + an unfolded polypeptide.. Its function is as follows. Together with its co-chaperonin GroES, plays an essential role in assisting protein folding. The GroEL-GroES system forms a nano-cage that allows encapsulation of the non-native substrate proteins and provides a physical environment optimized to promote and accelerate protein folding. The sequence is that of Chaperonin GroEL from Xanthomonas campestris pv. campestris (strain 8004).